The following is a 226-amino-acid chain: Lipoprotein-releasing system ATP-binding protein LolD (226 aa).

The region spanning 5 to 225 is the ABC transporter domain; it reads LELVEIERHF…TLKEKKIVEL (221 aa). Residue 41-48 participates in ATP binding; sequence APSGAGKS.

It belongs to the ABC transporter superfamily. Lipoprotein translocase (TC 3.A.1.125) family. In terms of assembly, the complex is composed of two ATP-binding proteins (LolD) and two transmembrane proteins (LolC and LolE).

It is found in the cell inner membrane. Its function is as follows. Part of the ABC transporter complex LolCDE involved in the translocation of mature outer membrane-directed lipoproteins, from the inner membrane to the periplasmic chaperone, LolA. Responsible for the formation of the LolA-lipoprotein complex in an ATP-dependent manner. This Bartonella quintana (strain Toulouse) (Rochalimaea quintana) protein is Lipoprotein-releasing system ATP-binding protein LolD.